We begin with the raw amino-acid sequence, 309 residues long: Protein FdhE (309 aa).

The protein belongs to the FdhE family.

The protein resides in the cytoplasm. Necessary for formate dehydrogenase activity. This Salmonella typhimurium (strain LT2 / SGSC1412 / ATCC 700720) protein is Protein FdhE.